The chain runs to 257 residues: Gasdermin-like protein rcd-1-1 (257 aa).

The protein belongs to the gasdermin family. In terms of assembly, heterooligomer; the heterooligomer with rcd-1-2 forms a ring-shaped pore complex when inserted in the membrane.

It localises to the cytoplasm. The protein localises to the cell membrane. Its function is as follows. Gasdermin-like protein involved in heterokaryon incompatibility, a process that ensures that during spontaneous vegetative cell fusion, only compatible cells from the same colony survive (non-self-recognition). In N.crassa, the rcd-1 locus exists as 2 incompatible alleles, rcd-1-1 (this entry) and rcd-1-2 (AC P0DW10). During the allorecognition process, forms a heterooligomer with rcd-1-2, thereby forming a functional gasdermin-like complex that binds to membranes and forms pores, triggering cell death. Binds negatively charged phospholipids, such as cardiolipin and phosphatidylserine. Also binds to phosphoinositides, preferentially to phosphatidylinositol-3-phosphate (PtdIns-3-P), PtdIns-5-P and PtdIns-3,5-P2. This Neurospora crassa (strain ATCC 24698 / 74-OR23-1A / CBS 708.71 / DSM 1257 / FGSC 987) protein is Gasdermin-like protein rcd-1-1.